A 634-amino-acid polypeptide reads, in one-letter code: Threonine--tRNA ligase (634 aa).

In terms of domain architecture, TGS spans 1–61 (MINITLPDGS…DHDASLRIIT (61 aa)). Residues 243 to 534 (DHRRIGKAQD…LIEHHAGAFP (292 aa)) are catalytic. 3 residues coordinate Zn(2+): C334, H385, and H511.

Belongs to the class-II aminoacyl-tRNA synthetase family. As to quaternary structure, homodimer. Zn(2+) is required as a cofactor.

Its subcellular location is the cytoplasm. The catalysed reaction is tRNA(Thr) + L-threonine + ATP = L-threonyl-tRNA(Thr) + AMP + diphosphate + H(+). Catalyzes the attachment of threonine to tRNA(Thr) in a two-step reaction: L-threonine is first activated by ATP to form Thr-AMP and then transferred to the acceptor end of tRNA(Thr). Also edits incorrectly charged L-seryl-tRNA(Thr). This is Threonine--tRNA ligase from Xanthomonas oryzae pv. oryzae (strain MAFF 311018).